A 626-amino-acid polypeptide reads, in one-letter code: Alpha terpineol synthase, chloroplastic (626 aa).

The N-terminal 38 residues, 1–38 (MALLSVAPLASKSRLHKTLITSAHHLKPSPTTIPTLPV), are a transit peptide targeting the chloroplast. Mg(2+) is bound by residues Asp-377, Asp-381, and Asp-529. A DDXXD motif motif is present at residues 377 to 381 (DDIYD).

This sequence belongs to the terpene synthase family. Tpsd subfamily. Mg(2+) is required as a cofactor. It depends on Mn(2+) as a cofactor.

It is found in the plastid. The protein resides in the chloroplast. It catalyses the reaction (2E)-geranyl diphosphate + H2O = (S)-alpha-terpineol + diphosphate. It carries out the reaction (2E)-geranyl diphosphate + H2O = (R)-alpha-terpineol + diphosphate. The catalysed reaction is (2E)-geranyl diphosphate + H2O = (2E)-geraniol + diphosphate. The enzyme catalyses (2E)-geranyl diphosphate = terpinolene + diphosphate. It catalyses the reaction (2E)-geranyl diphosphate = (4S)-limonene + diphosphate. It participates in terpene metabolism; oleoresin biosynthesis. Its pathway is secondary metabolite biosynthesis; terpenoid biosynthesis. Functionally, monoterpene synthase (TPS) involved in the biosynthesis of monoterpene natural products included in conifer oleoresin secretions and volatile emissions; these compounds contribute to biotic and abiotic stress defense against herbivores and pathogens. Catalyzes the conversion of (2E)-geranyl diphosphate (GPP) to (-)-alpha-terpineol, (+)-alpha-terpineol and terpin-4-ol, and, to a lower extent, to geraniol, terpinolene and (-)-limonene. The sequence is that of Alpha terpineol synthase, chloroplastic from Pinus banksiana (Jack pine).